We begin with the raw amino-acid sequence, 216 residues long: Protein-L-isoaspartate O-methyltransferase (216 aa).

Residue Ser63 is part of the active site.

Belongs to the methyltransferase superfamily. L-isoaspartyl/D-aspartyl protein methyltransferase family.

It is found in the cytoplasm. It catalyses the reaction [protein]-L-isoaspartate + S-adenosyl-L-methionine = [protein]-L-isoaspartate alpha-methyl ester + S-adenosyl-L-homocysteine. Catalyzes the methyl esterification of L-isoaspartyl residues in peptides and proteins that result from spontaneous decomposition of normal L-aspartyl and L-asparaginyl residues. It plays a role in the repair and/or degradation of damaged proteins. The protein is Protein-L-isoaspartate O-methyltransferase of Rhodopseudomonas palustris (strain BisB18).